We begin with the raw amino-acid sequence, 270 residues long: Probable septum site-determining protein MinC (270 aa).

It belongs to the MinC family. In terms of assembly, interacts with MinD and FtsZ.

In terms of biological role, cell division inhibitor that blocks the formation of polar Z ring septums. Rapidly oscillates between the poles of the cell to destabilize FtsZ filaments that have formed before they mature into polar Z rings. Prevents FtsZ polymerization. This chain is Probable septum site-determining protein MinC, found in Cupriavidus necator (strain ATCC 17699 / DSM 428 / KCTC 22496 / NCIMB 10442 / H16 / Stanier 337) (Ralstonia eutropha).